A 355-amino-acid polypeptide reads, in one-letter code: Protein pelota homolog (355 aa).

This sequence belongs to the eukaryotic release factor 1 family. Pelota subfamily. Monomer. It depends on a divalent metal cation as a cofactor.

The protein resides in the cytoplasm. Functionally, may function in recognizing stalled ribosomes, interact with stem-loop structures in stalled mRNA molecules, and effect endonucleolytic cleavage of the mRNA. May play a role in the release non-functional ribosomes and degradation of damaged mRNAs. Has endoribonuclease activity. This is Protein pelota homolog from Halorubrum lacusprofundi (strain ATCC 49239 / DSM 5036 / JCM 8891 / ACAM 34).